A 496-amino-acid chain; its full sequence is Flt3-interacting zinc finger protein 1 (496 aa).

N-acetylmethionine is present on M1. 6 consecutive C2H2-type zinc fingers follow at residues 23-45 (FHCS…FARH), 51-73 (HACP…LRSH), 79-101 (YRCS…QVVH), 107-130 (YCCL…KRQH), 200-222 (FACG…WAAH), and 228-250 (FKCP…KLTH). A disordered region spans residues 250-280 (HDLQGPGAPPAQAWAAGPGAGPETAGEGTAA). A compositionally biased stretch (low complexity) spans 259 to 280 (PAQAWAAGPGAGPETAGEGTAA). 5 C2H2-type zinc fingers span residues 331 to 352 (YQCD…LEAH), 358 to 381 (YGCG…RVSH), 414 to 436 (FGCS…VLVH), 442 to 464 (FPCL…RLLH), and 470 to 492 (FPCH…LKLH). The interval 378 to 412 (RVSHGEGGGEEAATAAREREPASGEPPSGSGRGKK) is disordered.

In terms of assembly, interacts with FLT3 cytoplasmic catalytic domain, following receptor stimulation, in a kinase-independent manner. Does not interact with other structurally related receptor tyrosine kinases, including KIT, CSF1R and PDGFR. Interacts with NRL. Widely expressed.

The protein localises to the cytoplasm. It is found in the nucleus. May be a transcriptional repressor of NRL function in photoreceptors. Does not repress CRX-mediated transactivation. The protein is Flt3-interacting zinc finger protein 1 (FIZ1) of Homo sapiens (Human).